The primary structure comprises 197 residues: Nucleoid occlusion factor SlmA (197 aa).

The HTH tetR-type domain occupies 7-67 (INRREHILQC…GLIEFIEESL (61 aa)). The H-T-H motif DNA-binding region spans 30 to 49 (TTAKLASEVGVSEAALYRHF). A coiled-coil region spans residues 110–130 (ALLGENERLRSRISSLFAKIE).

This sequence belongs to the nucleoid occlusion factor SlmA family. Homodimer. Interacts with FtsZ.

The protein localises to the cytoplasm. It is found in the nucleoid. In terms of biological role, required for nucleoid occlusion (NO) phenomenon, which prevents Z-ring formation and cell division over the nucleoid. Acts as a DNA-associated cell division inhibitor that binds simultaneously chromosomal DNA and FtsZ, and disrupts the assembly of FtsZ polymers. SlmA-DNA-binding sequences (SBS) are dispersed on non-Ter regions of the chromosome, preventing FtsZ polymerization at these regions. In Shewanella sp. (strain W3-18-1), this protein is Nucleoid occlusion factor SlmA.